Consider the following 127-residue polypeptide: Aspartate 1-decarboxylase (127 aa).

Serine 25 functions as the Schiff-base intermediate with substrate; via pyruvic acid in the catalytic mechanism. Serine 25 carries the post-translational modification Pyruvic acid (Ser). Residue threonine 57 participates in substrate binding. Tyrosine 58 acts as the Proton donor in catalysis. Residue 73-75 (GAA) participates in substrate binding.

Belongs to the PanD family. As to quaternary structure, heterooctamer of four alpha and four beta subunits. Requires pyruvate as cofactor. Post-translationally, is synthesized initially as an inactive proenzyme, which is activated by self-cleavage at a specific serine bond to produce a beta-subunit with a hydroxyl group at its C-terminus and an alpha-subunit with a pyruvoyl group at its N-terminus.

Its subcellular location is the cytoplasm. The enzyme catalyses L-aspartate + H(+) = beta-alanine + CO2. It functions in the pathway cofactor biosynthesis; (R)-pantothenate biosynthesis; beta-alanine from L-aspartate: step 1/1. Its function is as follows. Catalyzes the pyruvoyl-dependent decarboxylation of aspartate to produce beta-alanine. In Staphylococcus aureus (strain JH1), this protein is Aspartate 1-decarboxylase.